Consider the following 640-residue polypeptide: Probable potassium transport system protein Kup 2 (640 aa).

Helical transmembrane passes span 19–39, 67–87, 118–138, 155–175, 181–201, 230–250, 265–285, 307–327, 355–375, 384–404, 415–435, and 437–457; these read LFSS…YGDI, VLSL…VVFV, GVVA…GVIT, EAAK…LFLV, GVIG…IAAL, FVGV…EALY, WLGL…ALLL, MVCL…SGVF, VYIP…VLVF, AYGI…FFVI, AVPL…ANLF, and IFDG…SMIT.

This sequence belongs to the HAK/KUP transporter (TC 2.A.72) family.

It is found in the cell inner membrane. It catalyses the reaction K(+)(in) + H(+)(in) = K(+)(out) + H(+)(out). Functionally, transport of potassium into the cell. Likely operates as a K(+):H(+) symporter. This chain is Probable potassium transport system protein Kup 2, found in Syntrophobacter fumaroxidans (strain DSM 10017 / MPOB).